A 96-amino-acid chain; its full sequence is uncharacterized protein (96 aa).

One can recognise an HTH cro/C1-type domain in the interval 38 to 91 (IEQLRKGTGLKIDDFARVLGVSVAMVKEWESRRVKPSSAELKLMRLIQANPALS). The segment at residues 49-68 (IDDFARVLGVSVAMVKEWES) is a DNA-binding region (H-T-H motif).

This is an uncharacterized protein from Escherichia coli O157:H7.